We begin with the raw amino-acid sequence, 108 residues long: uncharacterized protein (108 aa).

Residues 56–108 (ELPSRGCLPAPRPESGQGRLSTGISQNGGRSSAQPCPRCIAGESGHFSHTKNH) are disordered. Polar residues predominate over residues 73 to 89 (GRLSTGISQNGGRSSAQ).

This is an uncharacterized protein from Homo sapiens (Human).